Consider the following 137-residue polypeptide: Large ribosomal subunit protein mL61 (137 aa).

Belongs to the mitochondrion-specific ribosomal protein mL61 family. In terms of assembly, component of the mitochondrial large ribosomal subunit (mt-LSU). Mature yeast 74S mitochondrial ribosomes consist of a small (37S) and a large (54S) subunit. The 37S small subunit contains a 15S ribosomal RNA (15S mt-rRNA) and 34 different proteins. The 54S large subunit contains a 21S rRNA (21S mt-rRNA) and 46 different proteins.

The protein localises to the mitochondrion. Its function is as follows. Component of the mitochondrial ribosome (mitoribosome), a dedicated translation machinery responsible for the synthesis of mitochondrial genome-encoded proteins, including at least some of the essential transmembrane subunits of the mitochondrial respiratory chain. The mitoribosomes are attached to the mitochondrial inner membrane and translation products are cotranslationally integrated into the membrane. mL61 is not essential in cells grown at 30 degrees Celsius but is required for mitochondrial translation in cells grown at 18 degrees Celsius. The chain is Large ribosomal subunit protein mL61 (MRP49) from Saccharomyces cerevisiae (strain ATCC 204508 / S288c) (Baker's yeast).